The following is a 105-amino-acid chain: Flower-specific defensin (105 aa).

Residues 1 to 25 (MARSLCFMAFAILAMMLFVAYEVQA) form the signal peptide. 4 disulfide bridges follow: cysteine 28–cysteine 72, cysteine 39–cysteine 59, cysteine 45–cysteine 66, and cysteine 49–cysteine 68. A propeptide spans 73 to 105 (VFDEKMTKTGAEILAEEAKTLAAALLEEEIMDN) (removed in mature form).

It belongs to the DEFL family. As to expression, most abundant in the epidermal cell layers of the petals and sepals, within the connective cells of the anthers, and the cortical cells of the style. Not detected in the tapetum, pollen mother cells, the transmitting tissue, the vascular bundles of the anther and style or in leaves. Expressed also in ovaries, but barley detectable in roots.

It localises to the secreted. It is found in the vacuole. In terms of biological role, plant defense peptide with antifungal activity against F.oxysporum and B.cinerea. Retards the growth of the Lepidopteran insect pests H.armigera and H.punctigera. The polypeptide is Flower-specific defensin (D1) (Nicotiana alata (Winged tobacco)).